The primary structure comprises 554 residues: Neutral amino acid transporter 9 (554 aa).

Residues 1–112 (MDSDQTPLIN…GSDGTGKNSS (112 aa)) are Cytoplasmic-facing. A helical transmembrane segment spans residues 113–133 (IVTIFMIWNTMMGTSILSIPW). Residues 122-127 (TMMGTS) are important for arginine binding and amino acid transport. Serine 127 provides a ligand contact to arginine. The Lumenal portion of the chain corresponds to 134 to 139 (GIKQAG). A helical membrane pass occupies residues 140–160 (FTTGVCILFLMGILTLYCCYR). The Cytoplasmic segment spans residues 161-191 (VVKSRGTIPLTDTSNWEFPDVCQYYFGSFGR). A helical transmembrane segment spans residues 192 to 218 (WSSLLFSLVSLIGAMIVYWVLMSNFLF). Over 219-276 (NTGKFIYNYVNDVNVTDDVLSNNGSDKVICPNPDSTRPLNKSMDTYFGNGTNYEQFET) the chain is Lumenal. 4 N-linked (GlcNAc...) asparagine glycosylation sites follow: asparagine 232, asparagine 241, asparagine 258, and asparagine 267. A disulfide bond links cysteine 248 and cysteine 417. The chain crosses the membrane as a helical span at residues 277 to 293 (WWSKTNTVPFYLVVLLL). Over 294-302 (PLLSFRSPS) the chain is Cytoplasmic. The helical transmembrane segment at 303–327 (FFAKFNILGTVSIIYLVSLVTLKAA) threads the bilayer. Residues 328 to 349 (HLGFHLRFSWNQVQEFFVPEFR) lie on the Lumenal side of the membrane. A helical membrane pass occupies residues 350 to 370 (LSFPQLTGILTLAFFIHNCII). The Cytoplasmic segment spans residues 371 to 387 (TLLKNNRNQKNNVRDLS). Residues 388–408 (IAYLLVGLTYIYVGVAVFASF) form a helical membrane-spanning segment. The Lumenal segment spans residues 409-430 (PSPPLSKQCIQQNFLDNFPSSD). Residues 431 to 451 (ILAFVARIFLLFQMMTVYPLL) form a helical membrane-spanning segment. A CARC motif motif is present at residues 437–447 (RIFLLFQMMTV). The CRAC motif signature appears at 450–456 (LLGYLVR). Topologically, residues 452–472 (GYLVRVQLLGHIFGDIYPSVF) are cytoplasmic. The chain crosses the membrane as a helical span at residues 473-493 (HVLALNIAVVGVGVIMARFYP). Over 494 to 500 (NIGGIIR) the chain is Lumenal. A helical membrane pass occupies residues 501–521 (FSGAACGLAFVFVYPSLIHMI). Over 522–533 (SLHRRGQLKVHS) the chain is Cytoplasmic. Residues 534 to 554 (ILIHVSIIVLGIANLIAQFFM) form a helical membrane-spanning segment.

It belongs to the amino acid/polyamine transporter 2 family. SLC38A9 subfamily. Associated component of the Ragulator complex. Associated component of the Rag GTPases heterodimers. Glycosylated.

Its subcellular location is the lysosome membrane. The protein resides in the late endosome membrane. The catalysed reaction is L-leucine(in) = L-leucine(out). The enzyme catalyses L-tyrosine(in) = L-tyrosine(out). It catalyses the reaction L-glutamine(out) = L-glutamine(in). It carries out the reaction L-asparagine(out) = L-asparagine(in). In terms of biological role, lysosomal amino acid transporter involved in the activation of mTORC1 in response to amino acid levels. Probably acts as an amino acid sensor of the Rag GTPases and Ragulator complexes, 2 complexes involved in amino acid sensing and activation of mTORC1, a signaling complex promoting cell growth in response to growth factors, energy levels, and amino acids. Following activation by amino acids, the Ragulator and Rag GTPases function as a scaffold recruiting mTORC1 to lysosomes where it is in turn activated. SLC38A9 mediates transport of amino acids with low capacity and specificity with a slight preference for polar amino acids. Acts as an arginine sensor. Following activation by arginine binding, mediates transport of L-glutamine, leucine and tyrosine with high efficiency, and is required for the efficient utilization of these amino acids after lysosomal protein degradation. However, the transport mechanism is not well defined and the role of sodium is not clear. Guanine exchange factor (GEF) that, upon arginine binding, stimulates GDP release from RRAGA and therefore activates the Rag GTPase heterodimer and the mTORC1 pathway in response to nutrient sufficiency. This chain is Neutral amino acid transporter 9, found in Xenopus tropicalis (Western clawed frog).